A 155-amino-acid polypeptide reads, in one-letter code: 6,7-dimethyl-8-ribityllumazine synthase (155 aa).

Residues F24, 58 to 60 (AFE), and 82 to 84 (AII) each bind 5-amino-6-(D-ribitylamino)uracil. Residue 87–88 (ST) coordinates (2S)-2-hydroxy-3-oxobutyl phosphate. The active-site Proton donor is H90. 5-amino-6-(D-ribitylamino)uracil is bound at residue F115. R129 lines the (2S)-2-hydroxy-3-oxobutyl phosphate pocket.

The protein belongs to the DMRL synthase family.

The catalysed reaction is (2S)-2-hydroxy-3-oxobutyl phosphate + 5-amino-6-(D-ribitylamino)uracil = 6,7-dimethyl-8-(1-D-ribityl)lumazine + phosphate + 2 H2O + H(+). It participates in cofactor biosynthesis; riboflavin biosynthesis; riboflavin from 2-hydroxy-3-oxobutyl phosphate and 5-amino-6-(D-ribitylamino)uracil: step 1/2. Catalyzes the formation of 6,7-dimethyl-8-ribityllumazine by condensation of 5-amino-6-(D-ribitylamino)uracil with 3,4-dihydroxy-2-butanone 4-phosphate. This is the penultimate step in the biosynthesis of riboflavin. In Chlorobium luteolum (strain DSM 273 / BCRC 81028 / 2530) (Pelodictyon luteolum), this protein is 6,7-dimethyl-8-ribityllumazine synthase.